A 967-amino-acid chain; its full sequence is Cytosolic carboxypeptidase 2 (967 aa).

Positions 330-601 (YPYTYSDLQR…HFCDTLLDYC (272 aa)) constitute a Peptidase M14 domain. The Zn(2+) site is built by His396, Glu399, and His492. Glu565 serves as the catalytic Proton donor/acceptor. 2 disordered regions span residues 679-706 (KRRL…LHEA) and 944-967 (PGIS…NTMK). Over residues 946–967 (ISSSEPHFPNSSEDITVRNTMK) the composition is skewed to polar residues.

The protein belongs to the peptidase M14 family. Zn(2+) is required as a cofactor.

The protein resides in the cytoplasm. The protein localises to the cytosol. Its subcellular location is the cytoskeleton. It is found in the microtubule organizing center. It localises to the centrosome. The protein resides in the centriole. The protein localises to the cilium basal body. The catalysed reaction is (L-glutamyl)(n+1)-gamma-L-glutamyl-L-glutamyl-[protein] + H2O = (L-glutamyl)(n)-gamma-L-glutamyl-L-glutamyl-[protein] + L-glutamate. Its function is as follows. Metallocarboxypeptidase that mediates deglutamylation of target proteins. Catalyzes the deglutamylation of polyglutamate side chains generated by post-translational polyglutamylation in proteins such as tubulins. Also removes gene-encoded polyglutamates from the carboxy-terminus of target proteins such as MYLK. Does not show detyrosinase or deglycylase activities from the carboxy-terminus of tubulin. Metallocarboxypeptidase that mediates deglutamylation of tubulin and non-tubulin target proteins. Catalyzes the removal of polyglutamate side chains present on the gamma-carboxyl group of glutamate residues within the C-terminal tail of tubulin protein. Specifically cleaves tubulin long-side-chains, while it is not able to remove the branching point glutamate. Also catalyzes the removal of polyglutamate residues from the carboxy-terminus of non-tubulin proteins. In Xenopus tropicalis (Western clawed frog), this protein is Cytosolic carboxypeptidase 2 (agbl2).